We begin with the raw amino-acid sequence, 303 residues long: B1 kinase (303 aa).

It belongs to the protein kinase superfamily. Ser/Thr protein kinase family. Poxviruses subfamily. In terms of assembly, interacts with host JIP1; this interaction increases the amount of MAPK bound to JIP1 and subsequently increases the activity of transcription factors, such as JUN, that respond to these complexes. Interacts with protein OPG198; this interaction inhibits the repressive activity of OPG198 pseudokinase on viral replication factory formation. The cofactor is Mg(2+). In terms of processing, autophosphorylated.

The protein resides in the virion. It is found in the host cytoplasm. It carries out the reaction L-seryl-[protein] + ATP = O-phospho-L-seryl-[protein] + ADP + H(+). The enzyme catalyses L-threonyl-[protein] + ATP = O-phospho-L-threonyl-[protein] + ADP + H(+). Functionally, essential serine/threonine-protein kinase that plays different role in the viral life cycle. Phosphorylates the host small ribosomal protein RACK1 thereby customizing the ribosomes to a state optimal for viral mRNAs (which contain poly-A leaders) but not for host mRNAs. Facilitates viral DNA replication by inhibiting host BANF1, a cellular host defense responsive to foreign DNA. Phosphorylates host BANF1 on serine and threonine residues; this leads to BANF1 relocalization to the cytoplasm, loss of dimerization and impaired DNA binding activity. Indeed, BANF1 activity depends on its DNA-binding property which is blocked by VPK1-mediated phosphorylation. Required for viral intermediate genes expression, probably by inhibiting host BANF1. Modulates cellular responses via host JUN by two different mechanisms, either by direct phosphorylation or by modulation of upstream JIP1-MAPK complexes. Seems to participate in the accumulation/processing of late proteins and thus in virion maturation. In addition, inhibits B12 repressive activity on viral DNA replication via a phosphorylation-dependent mechanism. The polypeptide is B1 kinase (OPG187) (Cynomys gunnisoni (Gunnison's prairie dog)).